Reading from the N-terminus, the 342-residue chain is Glycerol-3-phosphate dehydrogenase [NAD(P)+] (342 aa).

3 residues coordinate NADPH: Trp11, Arg33, and Lys107. Residues Lys107, Gly143, and Ser145 each coordinate sn-glycerol 3-phosphate. An NADPH-binding site is contributed by Ala147. The sn-glycerol 3-phosphate site is built by Lys198, Asp251, Ser261, Arg262, and Asn263. Lys198 serves as the catalytic Proton acceptor. Arg262 serves as a coordination point for NADPH. Positions 286 and 288 each coordinate NADPH.

The protein belongs to the NAD-dependent glycerol-3-phosphate dehydrogenase family.

Its subcellular location is the cytoplasm. It carries out the reaction sn-glycerol 3-phosphate + NAD(+) = dihydroxyacetone phosphate + NADH + H(+). The catalysed reaction is sn-glycerol 3-phosphate + NADP(+) = dihydroxyacetone phosphate + NADPH + H(+). The protein operates within membrane lipid metabolism; glycerophospholipid metabolism. Catalyzes the reduction of the glycolytic intermediate dihydroxyacetone phosphate (DHAP) to sn-glycerol 3-phosphate (G3P), the key precursor for phospholipid synthesis. In Paracidovorax citrulli (strain AAC00-1) (Acidovorax citrulli), this protein is Glycerol-3-phosphate dehydrogenase [NAD(P)+].